A 456-amino-acid chain; its full sequence is Adenylosuccinate lyase (456 aa).

N(6)-(1,2-dicarboxyethyl)-AMP is bound by residues 15 to 16 (RY), 90 to 92 (NHD), and 122 to 123 (TS). Catalysis depends on histidine 171, which acts as the Proton donor/acceptor. Position 247 (glutamine 247) interacts with N(6)-(1,2-dicarboxyethyl)-AMP. Catalysis depends on serine 295, which acts as the Proton donor/acceptor. N(6)-(1,2-dicarboxyethyl)-AMP contacts are provided by residues serine 296, 301-303 (KVN), asparagine 309, arginine 335, and 340-344 (STVLR).

It belongs to the lyase 1 family. Adenylosuccinate lyase subfamily. In terms of assembly, homotetramer. Residues from neighboring subunits contribute catalytic and substrate-binding residues to each active site.

It carries out the reaction N(6)-(1,2-dicarboxyethyl)-AMP = fumarate + AMP. The enzyme catalyses (2S)-2-[5-amino-1-(5-phospho-beta-D-ribosyl)imidazole-4-carboxamido]succinate = 5-amino-1-(5-phospho-beta-D-ribosyl)imidazole-4-carboxamide + fumarate. It functions in the pathway purine metabolism; AMP biosynthesis via de novo pathway; AMP from IMP: step 2/2. It participates in purine metabolism; IMP biosynthesis via de novo pathway; 5-amino-1-(5-phospho-D-ribosyl)imidazole-4-carboxamide from 5-amino-1-(5-phospho-D-ribosyl)imidazole-4-carboxylate: step 2/2. Functionally, catalyzes two reactions in de novo purine nucleotide biosynthesis. Catalyzes the breakdown of 5-aminoimidazole- (N-succinylocarboxamide) ribotide (SAICAR or 2-[5-amino-1-(5-phospho-beta-D-ribosyl)imidazole-4-carboxamido]succinate) to 5-aminoimidazole-4-carboxamide ribotide (AICAR or 5-amino-1-(5-phospho-beta-D-ribosyl)imidazole-4-carboxamide) and fumarate, and of adenylosuccinate (ADS or N(6)-(1,2-dicarboxyethyl)-AMP) to adenosine monophosphate (AMP) and fumarate. The polypeptide is Adenylosuccinate lyase (purB) (Legionella pneumophila (strain Corby)).